The primary structure comprises 226 residues: CASP-like protein 2BC1 (226 aa).

Topologically, residues 1–37 are cytoplasmic; sequence MRKHIDIVFSRLSGPILNPPPDNNVIPKTDRKLRITE. Residues 38–58 form a helical membrane-spanning segment; sequence VILRFAVVIFALVSAIMVGTA. Over 59–78 the chain is Extracellular; that stretch reads SGTRDLGGGIRIHAHFTLLK. The chain crosses the membrane as a helical span at residues 79 to 99; that stretch reads TLPFLVIVDGILAVYSLLQGL. The Cytoplasmic segment spans residues 100 to 114; the sequence is RCFLSLYMRHILLNK. Residues 115–135 form a helical membrane-spanning segment; that stretch reads ALAWTIFCCDQALAYVIFAAA. At 136-170 the chain is on the extracellular side; the sequence is ASTAETAYISEQGLDELQWIKVCMFFRAYCFKSGA. The chain crosses the membrane as a helical span at residues 171-191; sequence GMINAFLAALCMVFVSGMSVF. The Cytoplasmic segment spans residues 192–226; sequence HLFRLYGEKRAYGHIAEQVVISEEAAERRNSLNGI.

The protein belongs to the Casparian strip membrane proteins (CASP) family. Homodimer and heterodimers.

The protein localises to the cell membrane. This is CASP-like protein 2BC1 from Picea sitchensis (Sitka spruce).